We begin with the raw amino-acid sequence, 208 residues long: MARLNVKPTRMELSNLKNRLKTATRGHKLLKDKRDELMRRFVDLIRENNELRQTIEKELAANMKEFVLAKASENSLMVEELFAVPVHEVTLWIDIENIMSVNVPKFHVQSNTAREQEQGEFAYSYLSSNSEMDNTIQKTKELLEKLLRLAEVEKTCQLMADDIEKTRRRVNGLEYSIIPQLKETIHYIELKLEEAERASLVRIMKITS.

Belongs to the V-ATPase D subunit family.

In terms of biological role, produces ATP from ADP in the presence of a proton gradient across the membrane. This is V-type ATP synthase subunit D from Streptococcus pyogenes serotype M1.